A 1377-amino-acid polypeptide reads, in one-letter code: MKEIKDFEKIKIKIASPDQIRNWSYGEVKKSETINYRTLRPEKDGLFCERIFGTTKEWECYCGKFKSVRYKGIICDRCNVEVTHFKVRRERMGHIELAAPVAHIWYYKYIPSRIGLLLDITASSLNSILYYEKYVVIEPGDTDLKKMQLLNEDEYIEARERYGMSFNASMGAEAIKSLLENLDLDELSSKLRIQMIDKDDKTDKKLLRRLEIIENFKISGNKPEWMIMEVLPVIPPEIRPMVQLDGGRFATSDLNDLYRRVINRNNRLRKLLLLNAPEIIVRNEKRMLQESVDSLFDNSHKRKVVKGSSSRPLKSLSDALKGKQGRFRQNLLGKRVDYSGRSVIVVGPELKLHQCGLPAKMALELFKPFVIRRLIESEAVFNIKRAKNLIEQEVDEVWQILDLVIKEHPILLNRAPTLHRLGIQAFEPVLVEGKAIKLHPLVCHAYNADFDGDQMAVHVPLTPSAQAESWALMLSTNNLLNPANGHPIVFPSQDIVLGLYYLTMEKKNTVGEGKKFLNFNNVILAINNRSLDYNASIYVKIDGKYKKTTAGRVIFNEALPNGIEFVNKTLSDLELQILISKVYVVHGSSTVIEMLDIIKELGFKYATKFGCTISMSDIIVPDEKKAYIDRANKEIAKIQNDYAKGVITGEERYNNVVSVWLKTNEELTNKMMEILKKDRDGFNVIYMMADSGARGSRNQIRQLAGMRGLMAKTSGDIIELPIISNFKEGLSVIEFFISTNGARKGLADTALKTADAGYLTRRLVDIAQDVVVRIEDCGTINGIKVETVKNGEEILESLKEKAVGSYSIERIKNPITGEIVLDANEEISEAKIELLEKIGIEKLVIRSVLTCEAEHGVCQKCYGRDFSKNKPVNIGEAVGIIAAQSIGQPGTQLTMRTFHIGGVAQAGSEDDKISLKNTFILNGIEGFNVRVENGILFTRKGTLKIINVFYEEKIKNIKEIKVSDSQRVIKGIPLFVNNKGVEILSSYIGYVKLRDDKFLIVSEEQEVSLKAGTKLEIEVGEYVESGKVIGTFDPFAEPIIAEVKGKIKFKDIILGTTLKEEINTETGNVEKRITDNVFESLDPRIFIIDSGGVEIASYVLPGDAYLQVEDGQNINIGDIIAKLSKGSEKTQDITGGLPRVNDLFETRIPKNLTEMAKVSGIVQFKSIQKGKRLINILDEYGVEHKHYIPAGKHLLVRDGDIVKAGDMLCDGRINPHDVLEILGGISLQEFLLAEIQDVYRKQGVSINDKHIGVIIKQMMKKVKIVAVGDTNFVYGQKVDKHTFYEQNRKVIEQGGEPAIASPILIGVTKTSLNIDSFISAASFQETTKVLTDASIAGKIDDLRGLKENVVIGHLIPTGTGMGLYKKIKVSENVNSEV.

Zn(2+) contacts are provided by Cys-60, Cys-62, Cys-75, and Cys-78. Mg(2+)-binding residues include Asp-449, Asp-451, and Asp-453. Zn(2+)-binding residues include Cys-777, Cys-851, Cys-858, and Cys-861.

The protein belongs to the RNA polymerase beta' chain family. The RNAP catalytic core consists of 2 alpha, 1 beta, 1 beta' and 1 omega subunit. When a sigma factor is associated with the core the holoenzyme is formed, which can initiate transcription. Requires Mg(2+) as cofactor. Zn(2+) is required as a cofactor.

It carries out the reaction RNA(n) + a ribonucleoside 5'-triphosphate = RNA(n+1) + diphosphate. Its function is as follows. DNA-dependent RNA polymerase catalyzes the transcription of DNA into RNA using the four ribonucleoside triphosphates as substrates. The sequence is that of DNA-directed RNA polymerase subunit beta' from Borreliella afzelii (strain PKo) (Borrelia afzelii).